A 525-amino-acid polypeptide reads, in one-letter code: Ribosomal protein S6 kinase beta-1 (525 aa).

Positions 28 to 32 match the TOS motif motif; sequence FDIDL. A compositionally biased stretch (acidic residues) spans 32 to 46; it reads LDQPEDAGSEDELEE. The segment at 32-54 is disordered; that stretch reads LDQPEDAGSEDELEEGGQLNESM. The 262-residue stretch at 91 to 352 folds into the Protein kinase domain; it reads FELLRVLGKG…AGEVQAHPFF (262 aa). ATP contacts are provided by residues 97 to 105 and Lys123; that span reads LGKGGYGKV. Asp218 (proton acceptor) is an active-site residue. Thr252 bears the Phosphothreonine; by PDPK1 mark. The AGC-kinase C-terminal domain occupies 353-423; sequence RHINWEELLA…VAPSVLESVK (71 aa). The tract at residues 380–399 is disordered; the sequence is SQFDSKFTRQTPVDSPDDST. The span at 381–399 shows a compositional bias: polar residues; the sequence is QFDSKFTRQTPVDSPDDST. At Ser394 the chain carries Phosphoserine. Thr412 is modified (phosphothreonine; by MTOR, NEK6 and NEK7). Residues 424 to 525 form an autoinhibitory domain region; sequence EKFSFEPKIR…KRPEHLRMNL (102 aa). Residues Ser434 and Ser441 each carry the phosphoserine modification. The residue at position 444 (Thr444) is a Phosphothreonine. 2 positions are modified to phosphoserine: Ser447 and Ser452. Lys516 is subject to N6-acetyllysine.

This sequence belongs to the protein kinase superfamily. AGC Ser/Thr protein kinase family. S6 kinase subfamily. Interacts with PPP1R9A/neurabin-1. Interacts with RPTOR. Interacts with IRS1. Interacts with EIF3B and EIF3C. Interacts with TRAF4. Interacts with POLDIP3. Interacts (via N-terminus) with IER5. Phosphorylation at Thr-412 is regulated by mTORC1. The phosphorylation at this site is maintained by an agonist-dependent autophosphorylation mechanism. Activated by phosphorylation at Thr-252 by PDPK1. Dephosphorylation by PPP1CC at Thr-412 in mitochondrion.

It localises to the cytoplasm. The protein localises to the synapse. Its subcellular location is the synaptosome. The protein resides in the mitochondrion outer membrane. It is found in the mitochondrion. The catalysed reaction is L-seryl-[protein] + ATP = O-phospho-L-seryl-[protein] + ADP + H(+). The enzyme catalyses L-threonyl-[protein] + ATP = O-phospho-L-threonyl-[protein] + ADP + H(+). With respect to regulation, activation requires multiple phosphorylation events on serine/threonine residues. Activation appears to be first mediated by phosphorylation of multiple sites in the autoinhibitory domain, which facilitates phosphorylation at Thr-412, disrupting the autoinhibitory mechanism and allowing phosphorylation of Thr-252 by PDPK1. The active conformation of the kinase is believed to be stabilized by a mechanism involving three conserved phosphorylation sites located in the kinase domain activation loop (Thr-252) and in the AGC-kinase C-terminal domain (Ser-394 in the middle of the tail/linker region and Thr-412 within a hydrophobic motif at its end). Activated by mTORC1; isoform Alpha I and isoform Alpha II are sensitive to rapamycin, which inhibits activating phosphorylation at Thr-412. Activated by PDPK1. In terms of biological role, serine/threonine-protein kinase that acts downstream of mTOR signaling in response to growth factors and nutrients to promote cell proliferation, cell growth and cell cycle progression. Regulates protein synthesis through phosphorylation of EIF4B, RPS6 and EEF2K, and contributes to cell survival by repressing the pro-apoptotic function of BAD. Under conditions of nutrient depletion, the inactive form associates with the EIF3 translation initiation complex. Upon mitogenic stimulation, phosphorylation by the mechanistic target of rapamycin complex 1 (mTORC1) leads to dissociation from the EIF3 complex and activation. The active form then phosphorylates and activates several substrates in the pre-initiation complex, including the EIF2B complex and the cap-binding complex component EIF4B. Also controls translation initiation by phosphorylating a negative regulator of EIF4A, PDCD4, targeting it for ubiquitination and subsequent proteolysis. Promotes initiation of the pioneer round of protein synthesis by phosphorylating POLDIP3/SKAR. In response to IGF1, activates translation elongation by phosphorylating EEF2 kinase (EEF2K), which leads to its inhibition and thus activation of EEF2. Also plays a role in feedback regulation of mTORC2 by mTORC1 by phosphorylating MAPKAP1/SIN1, MTOR and RICTOR, resulting in the inhibition of mTORC2 and AKT1 signaling. Also involved in feedback regulation of mTORC1 and mTORC2 by phosphorylating DEPTOR. Mediates cell survival by phosphorylating the pro-apoptotic protein BAD and suppressing its pro-apoptotic function. Phosphorylates mitochondrial URI1 leading to dissociation of a URI1-PPP1CC complex. The free mitochondrial PPP1CC can then dephosphorylate RPS6KB1 at Thr-412, which is proposed to be a negative feedback mechanism for the RPS6KB1 anti-apoptotic function. Mediates TNF-alpha-induced insulin resistance by phosphorylating IRS1 at multiple serine residues, resulting in accelerated degradation of IRS1. In cells lacking functional TSC1-2 complex, constitutively phosphorylates and inhibits GSK3B. May be involved in cytoskeletal rearrangement through binding to neurabin. Phosphorylates and activates the pyrimidine biosynthesis enzyme CAD, downstream of MTOR. Following activation by mTORC1, phosphorylates EPRS and thereby plays a key role in fatty acid uptake by adipocytes and also most probably in interferon-gamma-induced translation inhibition. The sequence is that of Ribosomal protein S6 kinase beta-1 (Rps6kb1) from Mus musculus (Mouse).